An 88-amino-acid chain; its full sequence is Large ribosomal subunit protein bL27 (88 aa).

The interval 1 to 22 (MAHKKGASSSRNGRDSNAQRLG) is disordered. Polar residues predominate over residues 7 to 19 (ASSSRNGRDSNAQ).

Belongs to the bacterial ribosomal protein bL27 family.

The polypeptide is Large ribosomal subunit protein bL27 (Mycolicibacterium gilvum (strain PYR-GCK) (Mycobacterium gilvum (strain PYR-GCK))).